The sequence spans 664 residues: Cytoskeleton-associated protein 2 (664 aa).

The disordered stretch occupies residues 1 to 38 (MAESRKRFLGRAARNPLPVTRDLQLPPTRRDQPAFREQ). A compositionally biased stretch (basic and acidic residues) spans 28 to 38 (TRRDQPAFREQ). An association with alpha- and beta-tubulin region spans residues 160 to 319 (PKQDSNVSKK…ASKDAARTDS (160 aa)). Ser-186 is modified (phosphoserine). 4 disordered regions span residues 254–273 (IRSL…SRPL), 283–328 (LDKE…MVKP), 366–393 (GKGK…NPVG), and 512–545 (AHAT…KVEV). The segment covering 300 to 309 (GSSQAPSRSI) has biased composition (polar residues). The span at 366–375 (GKGKGLKRPP) shows a compositional bias: basic residues. Positions 533 to 545 (PGEENEHHGKVEV) are enriched in basic and acidic residues. The residue at position 561 (Thr-561) is a Phosphothreonine. Residue Ser-577 is modified to Phosphoserine. Position 579 is a phosphothreonine (Thr-579). Position 584 is a phosphoserine (Ser-584).

Belongs to the CKAP2 family. In terms of assembly, associates with alpha- and beta-tubulins.

It localises to the cytoplasm. The protein localises to the cytoskeleton. The protein resides in the spindle. It is found in the spindle pole. Its function is as follows. Possesses microtubule stabilizing properties. Involved in regulating aneuploidy, cell cycling, and cell death in a p53-dependent manner. The sequence is that of Cytoskeleton-associated protein 2 from Mus musculus (Mouse).